Consider the following 886-residue polypeptide: Valine--tRNA ligase (886 aa).

The 'HIGH' region signature appears at 53–63 (PNVTGSLHMGH). A 'KMSKS' region motif is present at residues 540 to 544 (KMSKS). Residue Lys543 participates in ATP binding. The stretch at 820-851 (IDVAAERRRMEKDLAAAQKELASTAAKLANAD) forms a coiled coil.

This sequence belongs to the class-I aminoacyl-tRNA synthetase family. ValS type 1 subfamily. Monomer.

The protein localises to the cytoplasm. The catalysed reaction is tRNA(Val) + L-valine + ATP = L-valyl-tRNA(Val) + AMP + diphosphate. In terms of biological role, catalyzes the attachment of valine to tRNA(Val). As ValRS can inadvertently accommodate and process structurally similar amino acids such as threonine, to avoid such errors, it has a 'posttransfer' editing activity that hydrolyzes mischarged Thr-tRNA(Val) in a tRNA-dependent manner. The polypeptide is Valine--tRNA ligase (Mycobacterium leprae (strain TN)).